Consider the following 1284-residue polypeptide: Neurexin-4 (1284 aa).

The N-terminal stretch at 1–35 (MRPPRSNTKAAFSSLQFGLLCLLLLVNNGIKSVQA) is a signal peptide. The Extracellular portion of the chain corresponds to 36–1217 (DAFTDYFSDY…LRKAYNEVDS (1182 aa)). The F5/8 type C domain maps to 47-185 (CNQPLMERAV…ISMRVELYGC (139 aa)). A disulfide bond links C47 and C185. N195, N329, N340, and N398 each carry an N-linked (GlcNAc...) asparagine glycan. The region spanning 220-369 (FKTAFANGVM…FTRVNTIYAC (150 aa)) is the Laminin G-like 1 domain. A disulfide bridge links C333 with C369. The Laminin G-like 2 domain occupies 403–540 (FRTYEETGVM…CGDDVVVDAC (138 aa)). Intrachain disulfides connect C507–C540, C546–C557, C551–C566, and C568–C578. One can recognise an EGF-like 1 domain in the interval 542 to 579 (MIDRCNPNPCQHKGLCHQNSREFFCDCGHTGYAGAVCH). Residue N668 is glycosylated (N-linked (GlcNAc...) asparagine). The Laminin G-like 3 domain occupies 824–962 (FRTTQENSVI…RGLYGISTGC (139 aa)). 4 cysteine pairs are disulfide-bonded: C934–C962, C966–C977, C971–C986, and C988–C998. The 38-residue stretch at 962-999 (CVGRCESNPCLNNGTCIERYDGYSCDCRWSAFKGPICA) folds into the EGF-like 2 domain. Residue N974 is glycosylated (N-linked (GlcNAc...) asparagine). The Laminin G-like 4 domain maps to 1032–1183 (FTTTIPKGFL…LGTQLTEDFC (152 aa)). N1047 and N1137 each carry an N-linked (GlcNAc...) asparagine glycan. The cysteines at positions 1147 and 1183 are disulfide-linked. Residues 1218 to 1238 (VLLACLLVILFLLLILMFFLI) traverse the membrane as a helical segment. Residues 1239-1284 (GRYLHRHKGDYLTHEDQGADGADDPDDAVLHSTTGHQVRKRTEIFI) lie on the Cytoplasmic side of the membrane.

It belongs to the neurexin family. In terms of assembly, forms a complex with Nrg and Cont. Forms a complex composed of septa junction proteins Nrx-IV/Nrx, Tsf2/MTf, Cont and Nrg during late embryogenesis. The C-terminal region interacts with coracle. Interacts with Patj in cis form. Found in septate junctions of epithelial and glial cells.

The protein resides in the cell membrane. The protein localises to the cell junction. Its subcellular location is the septate junction. In terms of biological role, seems to play a role in the formation and function of septate junctions. Septate junctions, which are the equivalent of vertebrates tight junctions, are characterized by regular arrays of transverse structures that span the intermembrane space and form a physical barrier to diffusion. Required for the blood-brain barrier formation. In Drosophila melanogaster (Fruit fly), this protein is Neurexin-4 (Nrx-IV).